The following is a 226-amino-acid chain: Enolase-phosphatase E1 (226 aa).

It belongs to the HAD-like hydrolase superfamily. MasA/MtnC family. As to quaternary structure, monomer. It depends on Mg(2+) as a cofactor.

The catalysed reaction is 5-methylsulfanyl-2,3-dioxopentyl phosphate + H2O = 1,2-dihydroxy-5-(methylsulfanyl)pent-1-en-3-one + phosphate. Its pathway is amino-acid biosynthesis; L-methionine biosynthesis via salvage pathway; L-methionine from S-methyl-5-thio-alpha-D-ribose 1-phosphate: step 3/6. The protein operates within amino-acid biosynthesis; L-methionine biosynthesis via salvage pathway; L-methionine from S-methyl-5-thio-alpha-D-ribose 1-phosphate: step 4/6. Bifunctional enzyme that catalyzes the enolization of 2,3-diketo-5-methylthiopentyl-1-phosphate (DK-MTP-1-P) into the intermediate 2-hydroxy-3-keto-5-methylthiopentenyl-1-phosphate (HK-MTPenyl-1-P), which is then dephosphorylated to form the acireductone 1,2-dihydroxy-3-keto-5-methylthiopentene (DHK-MTPene). The sequence is that of Enolase-phosphatase E1 from Shewanella baltica (strain OS155 / ATCC BAA-1091).